Consider the following 281-residue polypeptide: Pantothenate synthetase (281 aa).

Met17 to His24 lines the ATP pocket. The active-site Proton donor is His24. Residue Gln48 coordinates (R)-pantoate. Gln48 contributes to the beta-alanine binding site. Residue Gly134–Asp137 participates in ATP binding. Gln140 contributes to the (R)-pantoate binding site. ATP is bound by residues Val163 and Leu176–Arg179.

It belongs to the pantothenate synthetase family. In terms of assembly, homodimer.

It is found in the cytoplasm. The enzyme catalyses (R)-pantoate + beta-alanine + ATP = (R)-pantothenate + AMP + diphosphate + H(+). Its pathway is cofactor biosynthesis; (R)-pantothenate biosynthesis; (R)-pantothenate from (R)-pantoate and beta-alanine: step 1/1. Its function is as follows. Catalyzes the condensation of pantoate with beta-alanine in an ATP-dependent reaction via a pantoyl-adenylate intermediate. This Deinococcus radiodurans (strain ATCC 13939 / DSM 20539 / JCM 16871 / CCUG 27074 / LMG 4051 / NBRC 15346 / NCIMB 9279 / VKM B-1422 / R1) protein is Pantothenate synthetase.